The chain runs to 492 residues: MWLLLPILLYSAVFLSVRHIYSHWRRRGFPSEKAGITWSFLQKAYRREFRHVEAICEAYQSGKDRLLGIYCFFRPVLLVRNVELAQTILQQSNGHFSELKWDYISGYRRFNLLEKLAPMFGTKRLSEMFGQVQKVGDHLIHHLLDRQGQGCPQEVDIQQKLRVYSVNIIANLIYGLDINNFEHEDHILTSYLSHSQASIQSFTLGRLPQKSSYTYRLRDLIKQSVELREDHGLIRKDILQLLVRFRNGNEVSGDKWQLEPINDADKLLSIKRLAKVAEDLLKVSLDAVASTVTFTLLEILQEPLIVEKLRAEIKELSNENGQLKFEELNGLRYMDMCLKETLRKYPPLPIIERVCRKSYSLPNSKFTIDEGKTLMVPLLAMHRDEKYFSEPMKYKPLRFLQTANDVGQCEDKTKSNVFIGFGIGGSQCVGQNFAKLVIKVALIKLLQNFHLELDANQVKTLKVSHRPAPFIHTKDGLKVKLKRREINTKFYS.

C428 is a binding site for heme.

It belongs to the cytochrome P450 family. Heme is required as a cofactor.

Its subcellular location is the endoplasmic reticulum membrane. The protein localises to the microsome membrane. May be involved in the metabolism of insect hormones and in the breakdown of synthetic insecticides. This Drosophila melanogaster (Fruit fly) protein is Probable cytochrome P450 310a1 (Cyp310a1).